The following is a 105-amino-acid chain: uncharacterized protein (105 aa).

This is an uncharacterized protein from Rickettsia prowazekii (strain Madrid E).